Here is a 33-residue protein sequence, read N- to C-terminus: Kappa-theraphotoxin-Pg2a (33 aa).

3 disulfides stabilise this stretch: Cys-2-Cys-16, Cys-9-Cys-21, and Cys-15-Cys-28.

Expressed by the venom gland.

Its subcellular location is the secreted. Functionally, gating modifier of Kv2.1/KCNB1 channels. This is Kappa-theraphotoxin-Pg2a from Chilobrachys guangxiensis (Chinese earth tiger tarantula).